A 40-amino-acid polypeptide reads, in one-letter code: Hemoglobin subunit alpha-2 (40 aa).

In terms of domain architecture, Globin spans 1-40 (VGPHLDDYGGEALHRNFEVYPQTKTYFPHFDASAGSNQLK).

Belongs to the globin family. As to quaternary structure, heterotetramer of two alpha chains and two beta chains. Red blood cells.

Functionally, involved in oxygen transport from the lung to the various peripheral tissues. The chain is Hemoglobin subunit alpha-2 from Saara hardwickii (Indian spiny-tailed lizard).